Consider the following 341-residue polypeptide: L-threonine 3-dehydrogenase (341 aa).

A Zn(2+)-binding site is contributed by Cys38. Residues Thr40 and His43 each act as charge relay system in the active site. 6 residues coordinate Zn(2+): His63, Glu64, Cys93, Cys96, Cys99, and Cys107. NAD(+) is bound by residues Ile175, Asp195, Arg200, 262–264, and 286–287; these read LGI and IY.

The protein belongs to the zinc-containing alcohol dehydrogenase family. In terms of assembly, homotetramer. It depends on Zn(2+) as a cofactor.

It is found in the cytoplasm. It carries out the reaction L-threonine + NAD(+) = (2S)-2-amino-3-oxobutanoate + NADH + H(+). The protein operates within amino-acid degradation; L-threonine degradation via oxydo-reductase pathway; glycine from L-threonine: step 1/2. Functionally, catalyzes the NAD(+)-dependent oxidation of L-threonine to 2-amino-3-ketobutyrate. This Photorhabdus laumondii subsp. laumondii (strain DSM 15139 / CIP 105565 / TT01) (Photorhabdus luminescens subsp. laumondii) protein is L-threonine 3-dehydrogenase.